Consider the following 457-residue polypeptide: Serine--tRNA ligase (457 aa).

Residue 252–254 coordinates L-serine; the sequence is TAE. Residues 283-285 and V299 contribute to the ATP site; that span reads RKE. L-serine is bound at residue E306. 370-373 contacts ATP; the sequence is EVVS. T406 is a binding site for L-serine.

The protein belongs to the class-II aminoacyl-tRNA synthetase family. Type-1 seryl-tRNA synthetase subfamily. As to quaternary structure, homodimer. The tRNA molecule binds across the dimer.

The protein resides in the cytoplasm. The catalysed reaction is tRNA(Ser) + L-serine + ATP = L-seryl-tRNA(Ser) + AMP + diphosphate + H(+). The enzyme catalyses tRNA(Sec) + L-serine + ATP = L-seryl-tRNA(Sec) + AMP + diphosphate + H(+). The protein operates within aminoacyl-tRNA biosynthesis; selenocysteinyl-tRNA(Sec) biosynthesis; L-seryl-tRNA(Sec) from L-serine and tRNA(Sec): step 1/1. Catalyzes the attachment of serine to tRNA(Ser). Is also able to aminoacylate tRNA(Sec) with serine, to form the misacylated tRNA L-seryl-tRNA(Sec), which will be further converted into selenocysteinyl-tRNA(Sec). This Thermococcus onnurineus (strain NA1) protein is Serine--tRNA ligase.